The following is a 468-amino-acid chain: Argininosuccinate lyase (468 aa).

Belongs to the lyase 1 family. Argininosuccinate lyase subfamily.

It localises to the cytoplasm. The catalysed reaction is 2-(N(omega)-L-arginino)succinate = fumarate + L-arginine. It functions in the pathway amino-acid biosynthesis; L-arginine biosynthesis; L-arginine from L-ornithine and carbamoyl phosphate: step 3/3. This chain is Argininosuccinate lyase, found in Alkalilimnicola ehrlichii (strain ATCC BAA-1101 / DSM 17681 / MLHE-1).